A 280-amino-acid chain; its full sequence is Suppressor of disruption of TFIIS (280 aa).

The protein belongs to the SSM1 family.

In terms of biological role, could be an enzyme that inactivates 6-azauracil by modifying it. In Saccharomyces cerevisiae (strain ATCC 204508 / S288c) (Baker's yeast), this protein is Suppressor of disruption of TFIIS (SDT1).